The sequence spans 76 residues: Small ribosomal subunit protein bS18 (76 aa).

The protein belongs to the bacterial ribosomal protein bS18 family. In terms of assembly, part of the 30S ribosomal subunit. Forms a tight heterodimer with protein bS6.

Binds as a heterodimer with protein bS6 to the central domain of the 16S rRNA, where it helps stabilize the platform of the 30S subunit. This Petrotoga mobilis (strain DSM 10674 / SJ95) protein is Small ribosomal subunit protein bS18.